A 170-amino-acid polypeptide reads, in one-letter code: Protein HemX (170 aa).

The span at 1–17 (MTEQKNTNENDLQNGTS) shows a compositional bias: polar residues. The tract at residues 1 to 24 (MTEQKNTNENDLQNGTSKADDDIR) is disordered. Residues 37 to 57 (GLIGSAVAILVILAIGGGLYY) traverse the membrane as a helical segment.

It localises to the cell membrane. This is Protein HemX from Proteus mirabilis.